The chain runs to 250 residues: Small ribosomal subunit protein uS2 (250 aa).

The protein belongs to the universal ribosomal protein uS2 family.

This Marinobacter nauticus (strain ATCC 700491 / DSM 11845 / VT8) (Marinobacter aquaeolei) protein is Small ribosomal subunit protein uS2.